A 75-amino-acid chain; its full sequence is Translational regulator CsrA (75 aa).

Belongs to the CsrA/RsmA family. In terms of assembly, homodimer; the beta-strands of each monomer intercalate to form a hydrophobic core, while the alpha-helices form wings that extend away from the core.

The protein resides in the cytoplasm. In terms of biological role, a translational regulator that binds mRNA to regulate translation initiation and/or mRNA stability. Usually binds in the 5'-UTR at or near the Shine-Dalgarno sequence preventing ribosome-binding, thus repressing translation. Its main target seems to be the major flagellin gene, while its function is anatagonized by FliW. The sequence is that of Translational regulator CsrA from Alkaliphilus metalliredigens (strain QYMF).